We begin with the raw amino-acid sequence, 200 residues long: 3-isopropylmalate dehydratase small subunit (200 aa).

It belongs to the LeuD family. LeuD type 1 subfamily. Heterodimer of LeuC and LeuD.

The catalysed reaction is (2R,3S)-3-isopropylmalate = (2S)-2-isopropylmalate. It functions in the pathway amino-acid biosynthesis; L-leucine biosynthesis; L-leucine from 3-methyl-2-oxobutanoate: step 2/4. In terms of biological role, catalyzes the isomerization between 2-isopropylmalate and 3-isopropylmalate, via the formation of 2-isopropylmaleate. The chain is 3-isopropylmalate dehydratase small subunit from Serratia proteamaculans (strain 568).